We begin with the raw amino-acid sequence, 71 residues long: Translation initiation factor IF-1 (71 aa).

Positions 1 to 71 (MAKQAAIEQD…LTKARITYRY (71 aa)) constitute an S1-like domain.

The protein belongs to the IF-1 family. As to quaternary structure, component of the 30S ribosomal translation pre-initiation complex which assembles on the 30S ribosome in the order IF-2 and IF-3, IF-1 and N-formylmethionyl-tRNA(fMet); mRNA recruitment can occur at any time during PIC assembly.

It is found in the cytoplasm. Functionally, one of the essential components for the initiation of protein synthesis. Stabilizes the binding of IF-2 and IF-3 on the 30S subunit to which N-formylmethionyl-tRNA(fMet) subsequently binds. Helps modulate mRNA selection, yielding the 30S pre-initiation complex (PIC). Upon addition of the 50S ribosomal subunit IF-1, IF-2 and IF-3 are released leaving the mature 70S translation initiation complex. The sequence is that of Translation initiation factor IF-1 from Christiangramia forsetii (strain DSM 17595 / CGMCC 1.15422 / KT0803) (Gramella forsetii).